A 417-amino-acid polypeptide reads, in one-letter code: NADH-quinone oxidoreductase subunit D (417 aa).

This sequence belongs to the complex I 49 kDa subunit family. NDH-1 is composed of 14 different subunits. Subunits NuoB, C, D, E, F, and G constitute the peripheral sector of the complex.

The protein localises to the cell inner membrane. The enzyme catalyses a quinone + NADH + 5 H(+)(in) = a quinol + NAD(+) + 4 H(+)(out). In terms of biological role, NDH-1 shuttles electrons from NADH, via FMN and iron-sulfur (Fe-S) centers, to quinones in the respiratory chain. The immediate electron acceptor for the enzyme in this species is believed to be ubiquinone. Couples the redox reaction to proton translocation (for every two electrons transferred, four hydrogen ions are translocated across the cytoplasmic membrane), and thus conserves the redox energy in a proton gradient. This chain is NADH-quinone oxidoreductase subunit D, found in Albidiferax ferrireducens (strain ATCC BAA-621 / DSM 15236 / T118) (Rhodoferax ferrireducens).